The primary structure comprises 221 residues: Thiamine-phosphate synthase (221 aa).

Residues 46–50 (QFREK) and N83 each bind 4-amino-2-methyl-5-(diphosphooxymethyl)pyrimidine. The Mg(2+) site is built by D84 and D103. S122 is a 4-amino-2-methyl-5-(diphosphooxymethyl)pyrimidine binding site. 149-151 (TQS) is a binding site for 2-[(2R,5Z)-2-carboxy-4-methylthiazol-5(2H)-ylidene]ethyl phosphate. Residue K152 coordinates 4-amino-2-methyl-5-(diphosphooxymethyl)pyrimidine. 2-[(2R,5Z)-2-carboxy-4-methylthiazol-5(2H)-ylidene]ethyl phosphate-binding positions include G181 and 201-202 (IS).

The protein belongs to the thiamine-phosphate synthase family. The cofactor is Mg(2+).

It carries out the reaction 2-[(2R,5Z)-2-carboxy-4-methylthiazol-5(2H)-ylidene]ethyl phosphate + 4-amino-2-methyl-5-(diphosphooxymethyl)pyrimidine + 2 H(+) = thiamine phosphate + CO2 + diphosphate. The enzyme catalyses 2-(2-carboxy-4-methylthiazol-5-yl)ethyl phosphate + 4-amino-2-methyl-5-(diphosphooxymethyl)pyrimidine + 2 H(+) = thiamine phosphate + CO2 + diphosphate. The catalysed reaction is 4-methyl-5-(2-phosphooxyethyl)-thiazole + 4-amino-2-methyl-5-(diphosphooxymethyl)pyrimidine + H(+) = thiamine phosphate + diphosphate. It participates in cofactor biosynthesis; thiamine diphosphate biosynthesis; thiamine phosphate from 4-amino-2-methyl-5-diphosphomethylpyrimidine and 4-methyl-5-(2-phosphoethyl)-thiazole: step 1/1. Functionally, condenses 4-methyl-5-(beta-hydroxyethyl)thiazole monophosphate (THZ-P) and 2-methyl-4-amino-5-hydroxymethyl pyrimidine pyrophosphate (HMP-PP) to form thiamine monophosphate (TMP). The polypeptide is Thiamine-phosphate synthase (Actinobacillus succinogenes (strain ATCC 55618 / DSM 22257 / CCUG 43843 / 130Z)).